The primary structure comprises 268 residues: Aliphatic sulfonates import ATP-binding protein SsuB 2 (268 aa).

Positions 16–230 constitute an ABC transporter domain; the sequence is VQLRNVVRQF…DSGQAGFQSI (215 aa). 48–55 serves as a coordination point for ATP; sequence GASGSGKT.

The protein belongs to the ABC transporter superfamily. Aliphatic sulfonates importer (TC 3.A.1.17.2) family. As to quaternary structure, the complex is composed of two ATP-binding proteins (SsuB), two transmembrane proteins (SsuC) and a solute-binding protein (SsuA).

It localises to the cell inner membrane. The enzyme catalyses ATP + H2O + aliphatic sulfonate-[sulfonate-binding protein]Side 1 = ADP + phosphate + aliphatic sulfonateSide 2 + [sulfonate-binding protein]Side 1.. Part of the ABC transporter complex SsuABC involved in aliphatic sulfonates import. Responsible for energy coupling to the transport system. In Pseudomonas savastanoi pv. phaseolicola (strain 1448A / Race 6) (Pseudomonas syringae pv. phaseolicola (strain 1448A / Race 6)), this protein is Aliphatic sulfonates import ATP-binding protein SsuB 2.